We begin with the raw amino-acid sequence, 253 residues long: MAASGESGASGGGGSTEEAFMTFYSEVKQIEKRDSVLTSKNQIERLTRPGSSYFNLNPFEVLQIDPEVTDEEIKKRFRQLSILVHPDKNQDDADRAQKAFEAVDKAYKLLLDQEQKKRALDVIQAGKEYVEHTVKERKKQLKKEGKPTNVEEDDPELFKQAVYKQTMKLFAELEIKRKEREAKEMHERKRQREEEIEAQEKAKREREWQKNFEESRDGRVDSWRNFQANTKGKKEKKNRTFLRPPKVKMEQRE.

Ala2 carries the post-translational modification N-acetylalanine. Ser35 carries the phosphoserine modification. A J domain is found at 57-124; it reads NPFEVLQIDP…QKKRALDVIQ (68 aa). Position 146 is an N6-acetyllysine (Lys146). Basic and acidic residues predominate over residues 181-222; the sequence is EAKEMHERKRQREEEIEAQEKAKREREWQKNFEESRDGRVDS. A disordered region spans residues 181 to 253; the sequence is EAKEMHERKR…PPKVKMEQRE (73 aa). Short sequence motifs (nuclear localization signal) lie at residues 189 to 192 and 203 to 206; these read KRQR and KRER. Ser222 carries the post-translational modification Phosphoserine. Residues 231–240 are compositionally biased toward basic residues; sequence KGKKEKKNRT. The interval 232-253 is essential for polyglutamine aggregation suppression; sequence GKKEKKNRTFLRPPKVKMEQRE.

In terms of assembly, interacts with SRPK1. Interacts with HSP70 (HSPA1A or HSPA1B).

It is found in the nucleus. Functionally, suppresses polyglutamine (polyQ) aggregation of ATXN3 in neuronal cells. The sequence is that of DnaJ homolog subfamily C member 8 (Dnajc8) from Mus musculus (Mouse).